The sequence spans 195 residues: MDITKLINLFAKLPSLGPASSRRIVLHLLRHRQDVMVPLAAGIRELEMHTKECTICHNLDTISPCSICSDKGRDQSIICVVEELGDLWAFERGRIYSGVYHVLGGALSALSGIGPEDLNLGGIVDRIRTHGVKEVIVATSNDMDGQVTCHYIAQMVKGTDAKVTRLACGIPLGGEIDYLDEGTLRAALSSRYVIT.

The C4-type zinc-finger motif lies at 53–68; that stretch reads CTICHNLDTISPCSIC. In terms of domain architecture, Toprim spans 76–171; it reads SIICVVEELG…KVTRLACGIP (96 aa).

This sequence belongs to the RecR family.

May play a role in DNA repair. It seems to be involved in an RecBC-independent recombinational process of DNA repair. It may act with RecF and RecO. This Anaplasma marginale (strain St. Maries) protein is Recombination protein RecR.